Consider the following 193-residue polypeptide: Rho-related GTP-binding protein RhoA-C (193 aa).

GTP is bound by residues G12–T19, F30–T37, D59–Q63, N117–D120, and S160–K162. (Microbial infection) O-linked (GlcNAc) tyrosine; by Yersinia Afp18 glycosylation occurs at Y34. At C190 the chain carries Cysteine methyl ester. C190 is lipidated: S-geranylgeranyl cysteine. Positions L191–L193 are cleaved as a propeptide — removed in mature form.

It belongs to the small GTPase superfamily. Rho family. In terms of processing, (Microbial infection) Glycosylated at Tyr-34 by Yersinia ruckeri toxin Afp18. Mono-O-GlcNAcylation by Afp18 inhibits RhoA activation by guanine nucleotide exchange factors and blocks RhoA signaling.

It is found in the cell membrane. Functionally, regulates a signal transduction pathway linking plasma membrane receptors to the assembly of focal adhesions and actin stress fibers. This is Rho-related GTP-binding protein RhoA-C from Danio rerio (Zebrafish).